Here is a 434-residue protein sequence, read N- to C-terminus: MEEELVVISKSIVNPRSLKKPTSVKKIQLTPWDLSRLRFGYLQRGLLFHKIEVKQLQASLSVALDRFYPLAGRLVKLKNDDDTVSFFISCDGSGVEFVHAVAKNIELSDVLELSGSVPGFFASFFPATGIKNYHGVSRSLLMVQVTEMKDGVFIGFGYNSTVADATSIWKFINAWSEICSKDSSGSQTFQRRLHLKGWFFDEIDYPIHIPDPETKPTSYVTTPTNLQEKMFHVTKENVLKLDAKANDEADQKISSIQAVLAYIWRSMVKHSGMSREEETHCRLPINMRQRLNPPLEEECFGNVSQTGIATVTVGELLDHGLGWAAMQINNMELSQTDEKAKAFAENWVKNIKIPVSVGSKDLVVTNSHRFDVYCNDFGWGKPIAARAGPPYLNGRLVVFKGIGEASLDFQACLLPQVVEKLVKDAEFNEYVSIV.

Residue Asp-376 is the Proton acceptor of the active site.

It belongs to the plant acyltransferase family.

In terms of biological role, required for pathogen-induced salicylic acid (SA) accumulation and SA-mediated resistance to virulent and avirulent pathogens (e.g. P.syringae). The sequence is that of Protein ENHANCED PSEUDOMONAS SUSCEPTIBILITY 1 from Arabidopsis thaliana (Mouse-ear cress).